Consider the following 206-residue polypeptide: LexA repressor (206 aa).

Residues 28–48 constitute a DNA-binding region (H-T-H motif); it reads RAEIATRLGFKSANAAEEHLK. Residues Ser-123 and Lys-160 each act as for autocatalytic cleavage activity in the active site.

It belongs to the peptidase S24 family. As to quaternary structure, homodimer.

The catalysed reaction is Hydrolysis of Ala-|-Gly bond in repressor LexA.. Functionally, represses a number of genes involved in the response to DNA damage (SOS response), including recA and lexA. In the presence of single-stranded DNA, RecA interacts with LexA causing an autocatalytic cleavage which disrupts the DNA-binding part of LexA, leading to derepression of the SOS regulon and eventually DNA repair. The protein is LexA repressor of Shewanella sp. (strain MR-4).